The following is a 65-amino-acid chain: uncharacterized protein (65 aa).

This is an uncharacterized protein from Bacillus subtilis (Bacteriophage phi-105).